The primary structure comprises 147 residues: MSQGQGGITLDDLIAQADYLKRYIDSLQRTQLELLESINSIDSAKQAIETIKSGNKEMLVFIDRKGYLLAKVGGIIGDKVTVHLGLSYYAEVDLDSAIKILDKRKDEISKAAQNLNNELQKAASTYNQIVDILNQIQQAAARRQQGE.

This sequence belongs to the prefoldin alpha subunit family. Heterohexamer of two alpha and four beta subunits.

The protein localises to the cytoplasm. In terms of biological role, molecular chaperone capable of stabilizing a range of proteins. Seems to fulfill an ATP-independent, HSP70-like function in archaeal de novo protein folding. The polypeptide is Prefoldin subunit alpha (Saccharolobus islandicus (strain M.16.27) (Sulfolobus islandicus)).